The chain runs to 487 residues: Multiple inositol polyphosphate phosphatase 1 (487 aa).

Residues 1 to 30 (MLRAPGCLLRTSVAPAAALAAALLSSLARC) form the signal peptide. Histidine 89 is a catalytic residue. N-linked (GlcNAc...) asparagine glycans are attached at residues asparagine 242 and asparagine 481. The short motif at 484–487 (SDEL) is the Prevents secretion from ER element.

Belongs to the histidine acid phosphatase family. MINPP1 subfamily. N-glycosylated. In terms of tissue distribution, widely expressed with highest levels in kidney, liver, cerebellum and placenta.

The protein resides in the endoplasmic reticulum lumen. Its subcellular location is the secreted. It is found in the cell membrane. It carries out the reaction 1D-myo-inositol hexakisphosphate + H2O = 1D-myo-inositol 1,2,4,5,6-pentakisphosphate + phosphate. The catalysed reaction is 1D-myo-inositol 1,2,4,5,6-pentakisphosphate + H2O = 1D-myo-inositol 1,2,5,6-tetrakisphosphate + phosphate. The enzyme catalyses 1D-myo-inositol 1,2,5,6-tetrakisphosphate + H2O = 1D-myo-inositol 1,2,6-trisphosphate + phosphate. It catalyses the reaction 1D-myo-inositol 1,2,6-trisphosphate + H2O = 1D-myo-inositol 1,2-bisphosphate + phosphate. It carries out the reaction 1D-myo-inositol 1,2-bisphosphate + H2O = 1D-myo-inositol 2-phosphate + phosphate. The catalysed reaction is 1D-myo-inositol hexakisphosphate + H2O = 1D-myo-inositol 1,2,3,5,6-pentakisphosphate + phosphate. The enzyme catalyses 1D-myo-inositol 1,2,3,5,6-pentakisphosphate + H2O = 1D-myo-inositol 1,2,3,6-tetrakisphosphate + phosphate. It catalyses the reaction 1D-myo-inositol 1,2,3,6-tetrakisphosphate + H2O = 1D-myo-inositol 1,2,3-trisphosphate + phosphate. It carries out the reaction 1D-myo-inositol 1,2,3-trisphosphate + H2O = 1D-myo-inositol 2,3-bisphosphate + phosphate. The catalysed reaction is 1D-myo-inositol 2,3-bisphosphate + H2O = 1D-myo-inositol 2-phosphate + phosphate. The enzyme catalyses 1D-myo-inositol 1,3,4,5,6-pentakisphosphate + H2O = 1D-myo-inositol 1,4,5,6-tetrakisphosphate + phosphate. It catalyses the reaction 1D-myo-inositol 1,4,5,6-tetrakisphosphate + H2O = 1D-myo-inositol 1,4,5-trisphosphate + phosphate. It carries out the reaction (2R)-2,3-bisphosphoglycerate + H2O = (2R)-2-phosphoglycerate + phosphate. Multiple inositol polyphosphate phosphatase that hydrolyzes 1D-myo-inositol 1,3,4,5,6-pentakisphosphate (InsP5[2OH]) and 1D-myo-inositol hexakisphosphate (InsP6) to a range of less phosphorylated inositol phosphates. This regulates the availability of these various small molecule second messengers and metal chelators which control many aspects of cell physiology. Has a weak in vitro activity towards 1D-myo-inositol 1,4,5-trisphosphate which is unlikely to be physiologically relevant. By regulating intracellular inositol polyphosphates pools, which act as metal chelators, it may control the availability of intracellular calcium and iron, which are important for proper neuronal development and homeostasis. May have a dual substrate specificity, and function as a 2,3-bisphosphoglycerate 3-phosphatase hydrolyzing 2,3-bisphosphoglycerate to 2-phosphoglycerate. 2,3-bisphosphoglycerate (BPG) is formed as part of the Rapoport-Luebering glycolytic bypass and is a regulator of systemic oxygen homeostasis as the major allosteric effector of hemoglobin. The chain is Multiple inositol polyphosphate phosphatase 1 from Homo sapiens (Human).